The following is a 493-amino-acid chain: Ketol-acid reductoisomerase (NADP(+)) (493 aa).

Residues 14 to 208 (LDQLGRCRFM…GGHRAGVLES (195 aa)) form the KARI N-terminal Rossmann domain. Residues 45 to 48 (CGAQ), Arg-68, Arg-76, Ser-78, and 108 to 110 (DKQ) each bind NADP(+). The active site involves His-132. Residue Gly-158 participates in NADP(+) binding. 2 KARI C-terminal knotted domains span residues 209 to 345 (SFVA…APKG) and 346 to 486 (ENIK…MTDM). 4 residues coordinate Mg(2+): Asp-217, Glu-221, Glu-390, and Glu-394. Substrate is bound at residue Ser-415.

Belongs to the ketol-acid reductoisomerase family. Mg(2+) is required as a cofactor.

The catalysed reaction is (2R)-2,3-dihydroxy-3-methylbutanoate + NADP(+) = (2S)-2-acetolactate + NADPH + H(+). It catalyses the reaction (2R,3R)-2,3-dihydroxy-3-methylpentanoate + NADP(+) = (S)-2-ethyl-2-hydroxy-3-oxobutanoate + NADPH + H(+). The protein operates within amino-acid biosynthesis; L-isoleucine biosynthesis; L-isoleucine from 2-oxobutanoate: step 2/4. Its pathway is amino-acid biosynthesis; L-valine biosynthesis; L-valine from pyruvate: step 2/4. In terms of biological role, involved in the biosynthesis of branched-chain amino acids (BCAA). Catalyzes an alkyl-migration followed by a ketol-acid reduction of (S)-2-acetolactate (S2AL) to yield (R)-2,3-dihydroxy-isovalerate. In the isomerase reaction, S2AL is rearranged via a Mg-dependent methyl migration to produce 3-hydroxy-3-methyl-2-ketobutyrate (HMKB). In the reductase reaction, this 2-ketoacid undergoes a metal-dependent reduction by NADPH to yield (R)-2,3-dihydroxy-isovalerate. The polypeptide is Ketol-acid reductoisomerase (NADP(+)) (Histophilus somni (strain 129Pt) (Haemophilus somnus)).